The following is a 150-amino-acid chain: MQAVIDVKILDARLRDNLPAYATAGSAGLDLRAATEETMTIQPGETQLVPTGIAIHLSDPGLAAMLLPRSGLGHKHGIVLGNLVGLIDSDYQGQMFVSVWNRGQQPFRLEPMERIAQMVIVPVVQASFNIVDDFDASDRGAGGFGSTGRG.

Residues 69–71 (RSG), Asn-82, and 86–88 (LID) contribute to the substrate site.

Belongs to the dUTPase family. Mg(2+) is required as a cofactor.

The enzyme catalyses dUTP + H2O = dUMP + diphosphate + H(+). It participates in pyrimidine metabolism; dUMP biosynthesis; dUMP from dCTP (dUTP route): step 2/2. This enzyme is involved in nucleotide metabolism: it produces dUMP, the immediate precursor of thymidine nucleotides and it decreases the intracellular concentration of dUTP so that uracil cannot be incorporated into DNA. In Chromobacterium violaceum (strain ATCC 12472 / DSM 30191 / JCM 1249 / CCUG 213 / NBRC 12614 / NCIMB 9131 / NCTC 9757 / MK), this protein is Deoxyuridine 5'-triphosphate nucleotidohydrolase.